Reading from the N-terminus, the 324-residue chain is Probable acrylyl-CoA reductase AcuI (324 aa).

Residues Y41, 156–159 (SGGV), 178–180 (SGR), R198, L242, I256, S267, and N313 each bind NADP(+).

The protein belongs to the zinc-containing alcohol dehydrogenase family. Acrylyl-CoA reductase subfamily. In terms of assembly, homodimer.

The protein localises to the cytoplasm. It carries out the reaction propanoyl-CoA + NADP(+) = acryloyl-CoA + NADPH + H(+). Its function is as follows. Probably catalyzes the NADPH-dependent reduction of acrylyl-CoA to propanoyl-CoA. The polypeptide is Probable acrylyl-CoA reductase AcuI (acuI) (Escherichia coli (strain K12)).